The chain runs to 282 residues: 4-hydroxy-3-methylbut-2-enyl diphosphate reductase (282 aa).

C12 is a binding site for [4Fe-4S] cluster. H40 and H72 together coordinate (2E)-4-hydroxy-3-methylbut-2-enyl diphosphate. H40 and H72 together coordinate dimethylallyl diphosphate. Isopentenyl diphosphate is bound by residues H40 and H72. A [4Fe-4S] cluster-binding site is contributed by C94. Residue H122 participates in (2E)-4-hydroxy-3-methylbut-2-enyl diphosphate binding. H122 provides a ligand contact to dimethylallyl diphosphate. H122 is a binding site for isopentenyl diphosphate. Residue E124 is the Proton donor of the active site. T160 is a binding site for (2E)-4-hydroxy-3-methylbut-2-enyl diphosphate. C188 contributes to the [4Fe-4S] cluster binding site. 3 residues coordinate (2E)-4-hydroxy-3-methylbut-2-enyl diphosphate: S216, N218, and S260. S216, N218, and S260 together coordinate dimethylallyl diphosphate. Isopentenyl diphosphate contacts are provided by S216, N218, and S260.

This sequence belongs to the IspH family. [4Fe-4S] cluster is required as a cofactor.

The catalysed reaction is isopentenyl diphosphate + 2 oxidized [2Fe-2S]-[ferredoxin] + H2O = (2E)-4-hydroxy-3-methylbut-2-enyl diphosphate + 2 reduced [2Fe-2S]-[ferredoxin] + 2 H(+). It catalyses the reaction dimethylallyl diphosphate + 2 oxidized [2Fe-2S]-[ferredoxin] + H2O = (2E)-4-hydroxy-3-methylbut-2-enyl diphosphate + 2 reduced [2Fe-2S]-[ferredoxin] + 2 H(+). Its pathway is isoprenoid biosynthesis; dimethylallyl diphosphate biosynthesis; dimethylallyl diphosphate from (2E)-4-hydroxy-3-methylbutenyl diphosphate: step 1/1. It functions in the pathway isoprenoid biosynthesis; isopentenyl diphosphate biosynthesis via DXP pathway; isopentenyl diphosphate from 1-deoxy-D-xylulose 5-phosphate: step 6/6. Catalyzes the conversion of 1-hydroxy-2-methyl-2-(E)-butenyl 4-diphosphate (HMBPP) into a mixture of isopentenyl diphosphate (IPP) and dimethylallyl diphosphate (DMAPP). Acts in the terminal step of the DOXP/MEP pathway for isoprenoid precursor biosynthesis. The chain is 4-hydroxy-3-methylbut-2-enyl diphosphate reductase from Geobacter metallireducens (strain ATCC 53774 / DSM 7210 / GS-15).